The following is a 473-amino-acid chain: Photosystem II CP43 reaction center protein (473 aa).

A propeptide spanning residues 1 to 14 is cleaved from the precursor; sequence MKILYSPRRFYPVE. N-acetylthreonine is present on T15. A Phosphothreonine modification is found at T15. 5 helical membrane passes run 69–93, 134–155, 178–200, 255–275, and 291–312; these read LFEV…PHLA, IIGP…KDKN, KALY…RKIT, KPFA…LSYS, and WFNN…ASQA. E367 provides a ligand contact to [CaMn4O5] cluster. The chain crosses the membrane as a helical span at residues 447-471; it reads RARAAAAGFEKGIDRDFEPVLSTTP.

Belongs to the PsbB/PsbC family. PsbC subfamily. As to quaternary structure, PSII is composed of 1 copy each of membrane proteins PsbA, PsbB, PsbC, PsbD, PsbE, PsbF, PsbH, PsbI, PsbJ, PsbK, PsbL, PsbM, PsbT, PsbX, PsbY, PsbZ, Psb30/Ycf12, at least 3 peripheral proteins of the oxygen-evolving complex and a large number of cofactors. It forms dimeric complexes. Binds multiple chlorophylls and provides some of the ligands for the Ca-4Mn-5O cluster of the oxygen-evolving complex. It may also provide a ligand for a Cl- that is required for oxygen evolution. PSII binds additional chlorophylls, carotenoids and specific lipids. serves as cofactor.

The protein localises to the plastid. It is found in the chloroplast thylakoid membrane. One of the components of the core complex of photosystem II (PSII). It binds chlorophyll and helps catalyze the primary light-induced photochemical processes of PSII. PSII is a light-driven water:plastoquinone oxidoreductase, using light energy to abstract electrons from H(2)O, generating O(2) and a proton gradient subsequently used for ATP formation. The sequence is that of Photosystem II CP43 reaction center protein from Huperzia lucidula (Shining clubmoss).